We begin with the raw amino-acid sequence, 343 residues long: Biotin synthase (343 aa).

In terms of domain architecture, Radical SAM core spans 36–254 (NTIQISTLLS…IAVARIMMPK (219 aa)). [4Fe-4S] cluster-binding residues include C51, C55, and C58. Residues C95, C126, C186, and R258 each coordinate [2Fe-2S] cluster.

Belongs to the radical SAM superfamily. Biotin synthase family. As to quaternary structure, homodimer. It depends on [4Fe-4S] cluster as a cofactor. The cofactor is [2Fe-2S] cluster.

It catalyses the reaction (4R,5S)-dethiobiotin + (sulfur carrier)-SH + 2 reduced [2Fe-2S]-[ferredoxin] + 2 S-adenosyl-L-methionine = (sulfur carrier)-H + biotin + 2 5'-deoxyadenosine + 2 L-methionine + 2 oxidized [2Fe-2S]-[ferredoxin]. It participates in cofactor biosynthesis; biotin biosynthesis; biotin from 7,8-diaminononanoate: step 2/2. Its function is as follows. Catalyzes the conversion of dethiobiotin (DTB) to biotin by the insertion of a sulfur atom into dethiobiotin via a radical-based mechanism. The polypeptide is Biotin synthase (Buchnera aphidicola subsp. Acyrthosiphon pisum (strain APS) (Acyrthosiphon pisum symbiotic bacterium)).